The chain runs to 99 residues: U2-theraphotoxin-Lsp1a (99 aa).

The first 22 residues, 1–22 (MNTIQVIIFAVVLVLTVTVGQA), serve as a signal peptide directing secretion. The propeptide occupies 23-57 (DEDSPEASLLRKLKEAEASLFGQNLEESRNSRQKR). 3 disulfides stabilise this stretch: C58/C73, C65/C78, and C72/C93.

Belongs to the neurotoxin 14 (magi-1) family. 08 (Ltx-4) subfamily. In terms of tissue distribution, expressed by the venom gland.

The protein resides in the secreted. Its function is as follows. Insecticidal neurotoxin. The sequence is that of U2-theraphotoxin-Lsp1a from Lasiodora sp. (strain IBSP 8539) (Brazilian salmon pink birdeater).